A 136-amino-acid polypeptide reads, in one-letter code: Phospholipase A2 (136 aa).

Ca(2+) contacts are provided by Trp-8, Gly-10, and Gly-12. 5 disulfides stabilise this stretch: Cys-9/Cys-31, Cys-30/Cys-70, Cys-37/Cys-63, Cys-61/Cys-95, and Cys-105/Cys-117. Residue Asn-16 is glycosylated (N-linked (GlcNAc...) asparagine). His-34 is a catalytic residue. Position 35 (Asp-35) interacts with Ca(2+). Residue Asp-64 is part of the active site.

It belongs to the phospholipase A2 family. Ca(2+) is required as a cofactor. In terms of tissue distribution, expressed by the venom gland.

It localises to the secreted. It catalyses the reaction a 1,2-diacyl-sn-glycero-3-phosphocholine + H2O = a 1-acyl-sn-glycero-3-phosphocholine + a fatty acid + H(+). In terms of biological role, PLA2 catalyzes the calcium-dependent hydrolysis of the 2-acyl groups in 3-sn-phosphoglycerides. This chain is Phospholipase A2, found in Bombus terrestris (Buff-tailed bumblebee).